Consider the following 352-residue polypeptide: UDP-N-acetylglucosamine--N-acetylmuramyl-(pentapeptide) pyrophosphoryl-undecaprenol N-acetylglucosamine transferase (352 aa).

2 residues coordinate UDP-N-acetyl-alpha-D-glucosamine: S195 and Q287.

The protein belongs to the glycosyltransferase 28 family. MurG subfamily.

It localises to the cell membrane. The catalysed reaction is Mur2Ac(oyl-L-Ala-gamma-D-Glu-L-Lys-D-Ala-D-Ala)-di-trans,octa-cis-undecaprenyl diphosphate + UDP-N-acetyl-alpha-D-glucosamine = beta-D-GlcNAc-(1-&gt;4)-Mur2Ac(oyl-L-Ala-gamma-D-Glu-L-Lys-D-Ala-D-Ala)-di-trans,octa-cis-undecaprenyl diphosphate + UDP + H(+). The protein operates within cell wall biogenesis; peptidoglycan biosynthesis. In terms of biological role, cell wall formation. Catalyzes the transfer of a GlcNAc subunit on undecaprenyl-pyrophosphoryl-MurNAc-pentapeptide (lipid intermediate I) to form undecaprenyl-pyrophosphoryl-MurNAc-(pentapeptide)GlcNAc (lipid intermediate II). This chain is UDP-N-acetylglucosamine--N-acetylmuramyl-(pentapeptide) pyrophosphoryl-undecaprenol N-acetylglucosamine transferase, found in Streptococcus pneumoniae (strain JJA).